We begin with the raw amino-acid sequence, 684 residues long: PAN2-PAN3 deadenylation complex subunit PAN3 (684 aa).

Disordered regions lie at residues 1-38, 68-97, and 112-146; these read MLPP…RETA, DPST…PARE, and VPKG…STGL. Basic and acidic residues predominate over residues 21–38; it reads EKAKEKEKKHSPEKRETA. Residues 36 to 65 form a C3H1-type zinc finger; the sequence is ETAQRICRNVMIYGYCKYQDQGCIYYHPPA. Residues 127–139 show a composition bias toward pro residues; that stretch reads VPTPSAPTPPVWP. The tract at residues 263–544 is pseudokinase domain; the sequence is GANGASAPGL…SIDEVVKMMG (282 aa). Residues R326 and 375–382 each bind ATP; that span reads DYHPLSTT. The segment at 387 to 412 is disordered; that stretch reads YLSPNPPEPSPASALANQPPKRRSSP. 444–445 contributes to the ATP binding site; the sequence is SK. Residues 545 to 583 adopt a coiled-coil conformation; sequence PRILNELDAVQSYADVLENELGAEVENGRIVRLLTKLGF. Residues 584-684 form a knob domain region; that stretch reads INERAEFELD…NAGNNHRVHR (101 aa).

It belongs to the protein kinase superfamily. PAN3 family. In terms of assembly, homodimer. Forms a heterotrimer with a catalytic subunit PAN2 to form the poly(A)-nuclease (PAN) deadenylation complex. Interacts (via PAM-2 motif) with poly(A)-binding protein PAB1 (via PABC domain), conferring substrate specificity of the enzyme complex.

It localises to the cytoplasm. Regulatory subunit of the poly(A)-nuclease (PAN) deadenylation complex, one of two cytoplasmic mRNA deadenylases involved in mRNA turnover. PAN specifically shortens poly(A) tails of RNA and the activity is stimulated by poly(A)-binding protein PAB1. PAN deadenylation is followed by rapid degradation of the shortened mRNA tails by the CCR4-NOT complex. Deadenylated mRNAs are then degraded by two alternative mechanisms, namely exosome-mediated 3'-5' exonucleolytic degradation, or deadenylation-dependent mRNA decaping and subsequent 5'-3' exonucleolytic degradation by XRN1. May also be involved in post-transcriptional maturation of mRNA poly(A) tails. PAN3 acts as a positive regulator for PAN activity, recruiting the catalytic subunit PAN2 to mRNA via its interaction with RNA and with PAB1. In Cryptococcus neoformans var. neoformans serotype D (strain B-3501A) (Filobasidiella neoformans), this protein is PAN2-PAN3 deadenylation complex subunit PAN3.